The chain runs to 516 residues: Golgin-84 (516 aa).

Over 1–492 the chain is Cytoplasmic; it reads MSSWITGLAD…TFLRRYPMMR (492 aa). The tract at residues 28–80 is disordered; it reads QTENATGSADPMRRSMTSSTQSLSTSLKSTLSPVRRSGANSSSSVKSDGGVSV. Over residues 42–80 the composition is skewed to low complexity; it reads SMTSSTQSLSTSLKSTLSPVRRSGANSSSSVKSDGGVSV. A phosphoserine mark is found at serine 64 and serine 74. A coiled-coil region spans residues 108 to 423; it reads TNELAAFKIA…KAQTQLQQNM (316 aa). Residues 493–513 traverse the membrane as a helical; Anchor for type IV membrane protein segment; that stretch reads VSVIVYVALLHLWVMFVLLST. At 514–516 the chain is on the lumenal side; it reads TPN.

It is found in the golgi apparatus membrane. May be involved in maintaining Golgi structure and in intra-Golgi transport. This Drosophila melanogaster (Fruit fly) protein is Golgin-84 (Golgin84).